The primary structure comprises 76 residues: NADH dehydrogenase [ubiquinone] 1 subunit C1, mitochondrial (76 aa).

The transit peptide at 1–27 (MAPSVVLRSFSRLLAPARLPSCSSTRS) directs the protein to the mitochondrion. A helical transmembrane segment spans residues 40 to 59 (NWLAVGLSVGASVFMWIYLI).

Belongs to the complex I NDUFC1 subunit family. Complex I is composed of 45 different subunits.

The protein resides in the mitochondrion inner membrane. Functionally, accessory subunit of the mitochondrial membrane respiratory chain NADH dehydrogenase (Complex I), that is believed not to be involved in catalysis. Complex I functions in the transfer of electrons from NADH to the respiratory chain. The immediate electron acceptor for the enzyme is believed to be ubiquinone. This chain is NADH dehydrogenase [ubiquinone] 1 subunit C1, mitochondrial (Ndufc1), found in Mus musculus (Mouse).